Here is a 438-residue protein sequence, read N- to C-terminus: Transcription termination factor Rho (438 aa).

The Rho RNA-BD domain maps to 70-145 (YILFTGILEI…LKIEAINYLP (76 aa)). ATP is bound by residues 188–193 (GKGQRA), 200–205 (RTGKTE), and R231.

Belongs to the Rho family. Homohexamer. The homohexamer assembles into an open ring structure.

Functionally, facilitates transcription termination by a mechanism that involves Rho binding to the nascent RNA, activation of Rho's RNA-dependent ATPase activity, and release of the mRNA from the DNA template. The polypeptide is Transcription termination factor Rho (Helicobacter pylori (strain J99 / ATCC 700824) (Campylobacter pylori J99)).